A 418-amino-acid chain; its full sequence is Gamma-glutamyl phosphate reductase (418 aa).

Belongs to the gamma-glutamyl phosphate reductase family.

The protein resides in the cytoplasm. It carries out the reaction L-glutamate 5-semialdehyde + phosphate + NADP(+) = L-glutamyl 5-phosphate + NADPH + H(+). Its pathway is amino-acid biosynthesis; L-proline biosynthesis; L-glutamate 5-semialdehyde from L-glutamate: step 2/2. Functionally, catalyzes the NADPH-dependent reduction of L-glutamate 5-phosphate into L-glutamate 5-semialdehyde and phosphate. The product spontaneously undergoes cyclization to form 1-pyrroline-5-carboxylate. This chain is Gamma-glutamyl phosphate reductase, found in Desulforapulum autotrophicum (strain ATCC 43914 / DSM 3382 / VKM B-1955 / HRM2) (Desulfobacterium autotrophicum).